Reading from the N-terminus, the 111-residue chain is Antitoxin PrlF (111 aa).

The 48-residue stretch at 12–59 (TTESKVTIRGQTTIPAPVREALKLKPGQDSIHYEILPGGQVFMCRLGD) folds into the SpoVT-AbrB domain.

Homodimer; forms a complex with YhaV with stoichiometry PrlF(2)-YhaV(4), possibly as a YhaV(2)-PrlF(2)-YhaV(2) complex like the MazFE complex. This complex is seen to dimerize in solution.

It localises to the cytoplasm. Functionally, antitoxin component of a type II toxin-antitoxin (TA) system. Labile antitoxin that binds to the YhaV toxin and neutralizes its ribonuclease activity. Also acts as a transcription factor. The YhaV/PrlF complex binds the prlF-yhaV operon, probably negatively regulating its expression. In terms of biological role, negatively regulates its own expression as well as relieving the export block imposed by high-level synthesis of the LamB-LacZ hybrid protein. Overexpression leads to increased doubling time and also suppresses a htrA (degP) null phenotype. The polypeptide is Antitoxin PrlF (prlF) (Escherichia coli (strain K12)).